Reading from the N-terminus, the 335-residue chain is Glycerol-3-phosphate dehydrogenase [NAD(P)+] (335 aa).

3 residues coordinate NADPH: Ser-12, Trp-13, and Lys-107. Lys-107, Gly-138, and Ser-140 together coordinate sn-glycerol 3-phosphate. Ala-142 contacts NADPH. Sn-glycerol 3-phosphate contacts are provided by Lys-193, Asp-246, Ser-256, Arg-257, and Asn-258. Catalysis depends on Lys-193, which acts as the Proton acceptor. Residue Arg-257 participates in NADPH binding. NADPH is bound by residues Val-281 and Glu-283.

Belongs to the NAD-dependent glycerol-3-phosphate dehydrogenase family.

It localises to the cytoplasm. It carries out the reaction sn-glycerol 3-phosphate + NAD(+) = dihydroxyacetone phosphate + NADH + H(+). The catalysed reaction is sn-glycerol 3-phosphate + NADP(+) = dihydroxyacetone phosphate + NADPH + H(+). The protein operates within membrane lipid metabolism; glycerophospholipid metabolism. Its function is as follows. Catalyzes the reduction of the glycolytic intermediate dihydroxyacetone phosphate (DHAP) to sn-glycerol 3-phosphate (G3P), the key precursor for phospholipid synthesis. The chain is Glycerol-3-phosphate dehydrogenase [NAD(P)+] from Citrifermentans bemidjiense (strain ATCC BAA-1014 / DSM 16622 / JCM 12645 / Bem) (Geobacter bemidjiensis).